A 218-amino-acid polypeptide reads, in one-letter code: Small ribosomal subunit protein uS3c (218 aa).

One can recognise a KH type-2 domain in the interval Val-47–Ala-118.

Belongs to the universal ribosomal protein uS3 family. In terms of assembly, part of the 30S ribosomal subunit.

The protein resides in the plastid. The protein localises to the chloroplast. This Nymphaea alba (White water-lily) protein is Small ribosomal subunit protein uS3c (rps3).